The chain runs to 1062 residues: Probable sucrose-phosphate synthase 3 (1062 aa).

Basic and acidic residues predominate over residues 113-122; it reads EREQGRRDAT. The disordered stretch occupies residues 113-141; that stretch reads EREQGRRDATEDLSEDLSEGEKGDGLGEI. Ser126, Ser130, and Ser156 each carry phosphoserine. The segment at 715–735 is disordered; the sequence is MDGDKPSLNGSLEPNSADPVK.

This sequence belongs to the glycosyltransferase 1 family. In terms of assembly, homodimer or homotetramer.

It catalyses the reaction beta-D-fructose 6-phosphate + UDP-alpha-D-glucose = sucrose 6(F)-phosphate + UDP + H(+). Its pathway is glycan biosynthesis; sucrose biosynthesis; sucrose from D-fructose 6-phosphate and UDP-alpha-D-glucose: step 1/2. With respect to regulation, activity is regulated by phosphorylation and moderated by concentration of metabolites and light. Its function is as follows. Plays a role in photosynthetic sucrose synthesis by catalyzing the rate-limiting step of sucrose biosynthesis from UDP-glucose and fructose- 6-phosphate. Involved in the regulation of carbon partitioning in the leaves of plants. May regulate the synthesis of sucrose and therefore play a major role as a limiting factor in the export of photoassimilates out of the leaf. Plays a role for sucrose availability that is essential for plant growth and fiber elongation. This Arabidopsis thaliana (Mouse-ear cress) protein is Probable sucrose-phosphate synthase 3 (SPS3).